Consider the following 53-residue polypeptide: Weak toxin NWT (53 aa).

3 cysteine pairs are disulfide-bonded: Cys-6-Cys-11, Cys-17-Cys-33, and Cys-37-Cys-48.

Belongs to the three-finger toxin family. Ancestral subfamily. Orphan group II sub-subfamily. In terms of tissue distribution, expressed by the venom gland.

It is found in the secreted. Functionally, binds with low affinity and weakly inhibits muscle nicotinic acetylcholine receptor (nAChR). The protein is Weak toxin NWT of Naja kaouthia (Monocled cobra).